A 176-amino-acid chain; its full sequence is MIDDDGYRPNVGIVICNRQGQVMWARRYGQHSWQFPQGGINPGESAEQAMYRELFEEVGLSRKDVRILASTRNWLRYKLPKRLVRWDTKPVCIGQKQKWFLLQLIGNDADINMQTSSTPEFDGWRWVSYWYPVRQVVSFKRDVYRRVMKEFASVTMSLAESAPKPQSAPAYRRKRG.

Residues 6-149 enclose the Nudix hydrolase domain; it reads GYRPNVGIVI…KRDVYRRVMK (144 aa). The Nudix box motif lies at 38–59; it reads GGINPGESAEQAMYRELFEEVG.

Belongs to the Nudix hydrolase family. RppH subfamily. A divalent metal cation serves as cofactor.

Functionally, accelerates the degradation of transcripts by removing pyrophosphate from the 5'-end of triphosphorylated RNA, leading to a more labile monophosphorylated state that can stimulate subsequent ribonuclease cleavage. This chain is RNA pyrophosphohydrolase, found in Klebsiella pneumoniae (strain 342).